The following is a 542-amino-acid chain: NAD-dependent deacetylase sir2D (542 aa).

2 disordered regions span residues 1 to 37 (MNKR…NTPL) and 136 to 160 (ETST…TTTT). Positions 8–25 (NNELNEIQNNQNKNNNNK) are enriched in low complexity. Residues 165–193 (NETILLDILNNNKDEVDDEIQRIGNNVGN) are a coiled coil. The Deacetylase sirtuin-type domain occupies 283–542 (ATLDLSTFEK…VQDLLNKVKW (260 aa)). Residue histidine 411 is the Proton acceptor of the active site. Positions 419, 422, 443, and 446 each coordinate Zn(2+).

Belongs to the sirtuin family. It depends on Zn(2+) as a cofactor.

The enzyme catalyses N(6)-acetyl-L-lysyl-[protein] + NAD(+) + H2O = 2''-O-acetyl-ADP-D-ribose + nicotinamide + L-lysyl-[protein]. Its function is as follows. NAD-dependent deacetylase, which plays an important role in the regulation of transcriptional repression. This is NAD-dependent deacetylase sir2D (sir2D) from Dictyostelium discoideum (Social amoeba).